A 444-amino-acid chain; its full sequence is MSLDSNPRIFTVSRLNSEVRLLLENEMGIVWLVGEVSNLTMPVSGHWYLTLKDSQAQVKCAMFKGNNRRVTFKPQNGKQVLVKARLSLYEPRGDYQLIIESMQAEGDGRLQQEFDHLKMSLAAEGLFAQTAKKALPEQPKCVGIITSKTGAALFDILNVLKRRDPNLPVIIYPTLVQGTNAAIQIAQAIGRANSRNECDILIVGRGGGSLEDLWCFNEEIVARTIAASQIPIVSAVGHEIDVTIADFVADVRAPTPSAAAELVSRDLSSQLQIVSHQKRRLRSAIERYLSQQQKRLSTYQFRIEKQHPQLQLNTQSQRLDDLNQRLENHIQQRLERNQHKIENLSLRLSNLSPARKVHQDKQRIETLKRRLLDSMDRNLLMQRHQLALAAEKLDTVSPLATLKRGYSITRNASGSLITSTQQVHTGDTITTRFVDGEVQSTVDK.

The protein belongs to the XseA family. In terms of assembly, heterooligomer composed of large and small subunits.

It localises to the cytoplasm. The enzyme catalyses Exonucleolytic cleavage in either 5'- to 3'- or 3'- to 5'-direction to yield nucleoside 5'-phosphates.. Bidirectionally degrades single-stranded DNA into large acid-insoluble oligonucleotides, which are then degraded further into small acid-soluble oligonucleotides. This Aliivibrio salmonicida (strain LFI1238) (Vibrio salmonicida (strain LFI1238)) protein is Exodeoxyribonuclease 7 large subunit.